Reading from the N-terminus, the 268-residue chain is Tryptophan synthase alpha chain (268 aa).

Active-site proton acceptor residues include glutamate 49 and aspartate 60.

The protein belongs to the TrpA family. As to quaternary structure, tetramer of two alpha and two beta chains.

The enzyme catalyses (1S,2R)-1-C-(indol-3-yl)glycerol 3-phosphate + L-serine = D-glyceraldehyde 3-phosphate + L-tryptophan + H2O. It participates in amino-acid biosynthesis; L-tryptophan biosynthesis; L-tryptophan from chorismate: step 5/5. Functionally, the alpha subunit is responsible for the aldol cleavage of indoleglycerol phosphate to indole and glyceraldehyde 3-phosphate. The sequence is that of Tryptophan synthase alpha chain from Salmonella typhimurium (strain LT2 / SGSC1412 / ATCC 700720).